Here is a 527-residue protein sequence, read N- to C-terminus: BTB/POZ domain-containing protein At4g01160 (527 aa).

Residues 111–180 (NNNTSVLSVQ…MYSNSLSVTA (70 aa)) form the BTB domain. A BACK domain is found at 233-327 (VKPLTNAARQ…HMTTDRLKKI (95 aa)).

It functions in the pathway protein modification; protein ubiquitination. May act as a substrate-specific adapter of an E3 ubiquitin-protein ligase complex (CUL3-RBX1-BTB) which mediates the ubiquitination and subsequent proteasomal degradation of target proteins. The sequence is that of BTB/POZ domain-containing protein At4g01160 from Arabidopsis thaliana (Mouse-ear cress).